The following is a 294-amino-acid chain: UDP-3-O-acyl-N-acetylglucosamine deacetylase (294 aa).

Histidine 75, histidine 232, and aspartate 236 together coordinate Zn(2+). Residue histidine 259 is the Proton donor of the active site.

It belongs to the LpxC family. It depends on Zn(2+) as a cofactor.

It catalyses the reaction a UDP-3-O-[(3R)-3-hydroxyacyl]-N-acetyl-alpha-D-glucosamine + H2O = a UDP-3-O-[(3R)-3-hydroxyacyl]-alpha-D-glucosamine + acetate. It functions in the pathway glycolipid biosynthesis; lipid IV(A) biosynthesis; lipid IV(A) from (3R)-3-hydroxytetradecanoyl-[acyl-carrier-protein] and UDP-N-acetyl-alpha-D-glucosamine: step 2/6. Functionally, catalyzes the hydrolysis of UDP-3-O-myristoyl-N-acetylglucosamine to form UDP-3-O-myristoylglucosamine and acetate, the committed step in lipid A biosynthesis. The polypeptide is UDP-3-O-acyl-N-acetylglucosamine deacetylase (Campylobacter curvus (strain 525.92)).